The sequence spans 542 residues: uncharacterized protein (542 aa).

Positions 125-138 are enriched in low complexity; that stretch reads ANSNSSSTGRDSTP. Disordered regions lie at residues 125 to 182, 194 to 333, 390 to 428, and 459 to 487; these read ANSN…NHHN, LPPT…CSSS, SSSTLSSSSSTKTNNNSTTTTTTTTAKTSSTSTNDYSSI, and SSSSSSHVMKRSNGSSNGGNSTIQSPSCN. The span at 202–213 shows a compositional bias: polar residues; it reads QKPSFLSNSNQI. Low complexity-rich tracts occupy residues 228-306, 314-333, 390-423, and 459-479; these read SYTS…NSNN, NKLSNSNHSTNSNFSQCSSS, SSSTLSSSSSTKTNNNSTTTTTTTTAKTSSTSTN, and SSSSSSHVMKRSNGSSNGGNS.

This is an uncharacterized protein from Dictyostelium discoideum (Social amoeba).